We begin with the raw amino-acid sequence, 123 residues long: Large ribosomal subunit protein bL12 (123 aa).

The protein belongs to the bacterial ribosomal protein bL12 family. Homodimer. Part of the ribosomal stalk of the 50S ribosomal subunit. Forms a multimeric L10(L12)X complex, where L10 forms an elongated spine to which 2 to 4 L12 dimers bind in a sequential fashion. Binds GTP-bound translation factors.

Functionally, forms part of the ribosomal stalk which helps the ribosome interact with GTP-bound translation factors. Is thus essential for accurate translation. This is Large ribosomal subunit protein bL12 from Burkholderia vietnamiensis (strain G4 / LMG 22486) (Burkholderia cepacia (strain R1808)).